The sequence spans 383 residues: Decapping nuclease RAI1 (383 aa).

E166 provides a ligand contact to a divalent metal cation. E215 is a binding site for substrate. Positions 217, 235, and 236 each coordinate a divalent metal cation. 2 residues coordinate substrate: K237 and Q261.

This sequence belongs to the DXO/Dom3Z family. In terms of assembly, interacts with RAT1; the interaction is direct, stabilizes RAT1 protein structure and stimulates its exoribonuclease activity. The interaction also stimulates RAI1 pyrophosphohydrolase activity, probably by recruiting it to mRNA substrates. It depends on a divalent metal cation as a cofactor.

The protein localises to the nucleus. The catalysed reaction is a 5'-end NAD(+)-phospho-ribonucleoside in mRNA + H2O = a 5'-end phospho-ribonucleoside in mRNA + NAD(+) + H(+). It catalyses the reaction a 5'-end (N(7)-methyl 5'-triphosphoguanosine)-ribonucleoside-ribonucleotide in mRNA + H2O = a (N(7)-methyl 5'-triphosphoguanosine)-nucleoside + a 5'-end phospho-ribonucleoside in mRNA + H(+). The enzyme catalyses a 5'-end triphospho-ribonucleoside in mRNA + H2O = a 5'-end phospho-ribonucleoside in mRNA + diphosphate + H(+). In terms of biological role, decapping enzyme for NAD-capped RNAs: specifically hydrolyzes the nicotinamide adenine dinucleotide (NAD) cap from a subset of RNAs by removing the entire NAD moiety from the 5'-end of an NAD-capped RNA. The NAD-cap is present at the 5'-end of some RNAs and snoRNAs. In contrast to the canonical 5'-end N7 methylguanosine (m7G) cap, the NAD cap promotes mRNA decay. Also acts as a non-canonical decapping enzyme that removes the entire cap structure of m7G capped or incompletely capped RNAs. Has decapping activity toward incomplete 5'-end m7G cap mRNAs such as unmethylated 5'-end-capped RNA (cap0), while it has no activity toward 2'-O-ribose methylated m7G cap (cap1). Also possesses RNA 5'-pyrophosphohydrolase activity by hydrolyzing the 5'-end triphosphate to release pyrophosphates. Stimulates exoribonuclease activity of Rat1, allowing it to degrade RNAs with stable secondary structure more effectively. The chain is Decapping nuclease RAI1 from Lachancea thermotolerans (strain ATCC 56472 / CBS 6340 / NRRL Y-8284) (Yeast).